A 645-amino-acid polypeptide reads, in one-letter code: ATP-dependent zinc metalloprotease FtsH 3 (645 aa).

Over 1–11 the chain is Cytoplasmic; that stretch reads MQNKRNQSRVL. The chain crosses the membrane as a helical span at residues 12–32; sequence WLLLIYITIGIFIYVGVNSLI. The Periplasmic segment spans residues 33–110; that stretch reads GTPDVSKIEY…YVRSLENSWW (78 aa). The chain crosses the membrane as a helical span at residues 111–131; sequence ISILTFLLPVFLLIFLFTFLF. At 132-645 the chain is on the cytoplasmic side; it reads RSSGGGANQG…ENNLIERKGI (514 aa). ATP is bound at residue 202-209; the sequence is GEPGTGKT. Residue His-424 participates in Zn(2+) binding. The active site involves Glu-425. 2 residues coordinate Zn(2+): His-428 and Asp-501.

The protein in the central section; belongs to the AAA ATPase family. It in the C-terminal section; belongs to the peptidase M41 family. As to quaternary structure, homohexamer. Zn(2+) is required as a cofactor.

It is found in the cell inner membrane. Its function is as follows. Acts as a processive, ATP-dependent zinc metallopeptidase for both cytoplasmic and membrane proteins. Plays a role in the quality control of integral membrane proteins. This chain is ATP-dependent zinc metalloprotease FtsH 3, found in Petrotoga mobilis (strain DSM 10674 / SJ95).